Reading from the N-terminus, the 334-residue chain is Aspartate carbamoyltransferase catalytic subunit (334 aa).

Residues R71 and T72 each coordinate carbamoyl phosphate. L-aspartate is bound at residue K99. Carbamoyl phosphate-binding residues include R121, H151, and Q154. The L-aspartate site is built by R184 and R239. G280 and P281 together coordinate carbamoyl phosphate.

The protein belongs to the aspartate/ornithine carbamoyltransferase superfamily. ATCase family. Heterododecamer (2C3:3R2) of six catalytic PyrB chains organized as two trimers (C3), and six regulatory PyrI chains organized as three dimers (R2).

It carries out the reaction carbamoyl phosphate + L-aspartate = N-carbamoyl-L-aspartate + phosphate + H(+). Its pathway is pyrimidine metabolism; UMP biosynthesis via de novo pathway; (S)-dihydroorotate from bicarbonate: step 2/3. In terms of biological role, catalyzes the condensation of carbamoyl phosphate and aspartate to form carbamoyl aspartate and inorganic phosphate, the committed step in the de novo pyrimidine nucleotide biosynthesis pathway. The chain is Aspartate carbamoyltransferase catalytic subunit from Pseudomonas putida (strain ATCC 47054 / DSM 6125 / CFBP 8728 / NCIMB 11950 / KT2440).